The following is a 186-amino-acid chain: MQDNVIIDTSIFTNPNIYKSISLEQPIDAIEAFIGLTHKSSKKIYMPRTVYIELCKVVDLESIKSRFESSIIIKSPNRCNITINALALFDFVEDMRIRINKGLRIAEEFARDKTQDIQNTISKLREKYKEALRQGTLDSKEDVDVILLALELNGVILSGDEGINSWADKFGIRTVNPLFIQEFLSF.

This sequence belongs to the HARP family.

The catalysed reaction is Endonucleolytic cleavage of RNA, removing 5'-extranucleotides from tRNA precursor.. In terms of biological role, RNA-free RNase P that catalyzes the removal of the 5'-leader sequence from pre-tRNA to produce the mature 5'-terminus. The protein is RNA-free ribonuclease P of Hydrogenobaculum sp. (strain Y04AAS1).